A 378-amino-acid chain; its full sequence is Succinyl-diaminopimelate desuccinylase (378 aa).

Residue His-68 coordinates Zn(2+). Asp-70 is an active-site residue. Residue Asp-101 participates in Zn(2+) binding. Catalysis depends on Glu-135, which acts as the Proton acceptor. Residues Glu-136, Glu-164, and His-350 each contribute to the Zn(2+) site.

The protein belongs to the peptidase M20A family. DapE subfamily. In terms of assembly, homodimer. Requires Zn(2+) as cofactor. Co(2+) serves as cofactor.

The catalysed reaction is N-succinyl-(2S,6S)-2,6-diaminopimelate + H2O = (2S,6S)-2,6-diaminopimelate + succinate. Its pathway is amino-acid biosynthesis; L-lysine biosynthesis via DAP pathway; LL-2,6-diaminopimelate from (S)-tetrahydrodipicolinate (succinylase route): step 3/3. Functionally, catalyzes the hydrolysis of N-succinyl-L,L-diaminopimelic acid (SDAP), forming succinate and LL-2,6-diaminopimelate (DAP), an intermediate involved in the bacterial biosynthesis of lysine and meso-diaminopimelic acid, an essential component of bacterial cell walls. The polypeptide is Succinyl-diaminopimelate desuccinylase (Vibrio campbellii (strain ATCC BAA-1116)).